Reading from the N-terminus, the 320-residue chain is tRNA U34 carboxymethyltransferase (320 aa).

Carboxy-S-adenosyl-L-methionine contacts are provided by residues Lys-87, Trp-101, Lys-106, Gly-126, 148 to 150 (EPS), 176 to 177 (VE), Met-192, Tyr-196, and Arg-311.

Belongs to the class I-like SAM-binding methyltransferase superfamily. CmoB family. Homotetramer.

It catalyses the reaction carboxy-S-adenosyl-L-methionine + 5-hydroxyuridine(34) in tRNA = 5-carboxymethoxyuridine(34) in tRNA + S-adenosyl-L-homocysteine + H(+). In terms of biological role, catalyzes carboxymethyl transfer from carboxy-S-adenosyl-L-methionine (Cx-SAM) to 5-hydroxyuridine (ho5U) to form 5-carboxymethoxyuridine (cmo5U) at position 34 in tRNAs. The polypeptide is tRNA U34 carboxymethyltransferase (Desulfotalea psychrophila (strain LSv54 / DSM 12343)).